A 623-amino-acid chain; its full sequence is ATPase expression protein 3 (623 aa).

PPR repeat units follow at residues 217–251 (SVQCYNDILYFYSKKYDFATCRELFAQMKVEGCKP), 252–292 (NTTT…NGIF), 362–396 (NLKFVNLLISDLVLDHNVERAWSVLRYFELKQLKF), 405–439 (NSETMNTFLRYFAEQGRIDLCFLTYNYFVKDLVGP), and 445–479 (NVNTFDMLMKSLVKNGYTETLPTVFEVICALSERY).

It localises to the mitochondrion inner membrane. Its function is as follows. Required for respiration. The polypeptide is ATPase expression protein 3 (AEP3) (Candida glabrata (strain ATCC 2001 / BCRC 20586 / JCM 3761 / NBRC 0622 / NRRL Y-65 / CBS 138) (Yeast)).